Here is a 77-residue protein sequence, read N- to C-terminus: Large ribosomal subunit protein uL24 (77 aa).

It belongs to the universal ribosomal protein uL24 family. Part of the 50S ribosomal subunit.

In terms of biological role, one of two assembly initiator proteins, it binds directly to the 5'-end of the 23S rRNA, where it nucleates assembly of the 50S subunit. One of the proteins that surrounds the polypeptide exit tunnel on the outside of the subunit. This is Large ribosomal subunit protein uL24 from Sulfurovum sp. (strain NBC37-1).